The sequence spans 280 residues: Antiactivator FleN (280 aa).

ATP contacts are provided by residues 19 to 26 (KGGVGKTN), Glu153, Asn181, 215 to 217 (PYD), and Arg221.

It belongs to the ParA family. As to quaternary structure, forms homodimers. Interacts with FleQ.

ATP-binding allows dimerization and subsequent antagonistic effect against FleQ. In terms of biological role, ATPase that plays an important role in maintaining flagellar number in Pseudomonas aeruginosa. Exhibits anti-activator activity against FleQ, the global transcriptional regulator of flagellar genes. The chain is Antiactivator FleN from Pseudomonas aeruginosa (strain ATCC 15692 / DSM 22644 / CIP 104116 / JCM 14847 / LMG 12228 / 1C / PRS 101 / PAO1).